A 391-amino-acid chain; its full sequence is Acetate kinase (391 aa).

Residue Asn-4 coordinates Mg(2+). Lys-11 serves as a coordination point for ATP. Arg-85 contacts substrate. Residue Asp-142 is the Proton donor/acceptor of the active site. ATP contacts are provided by residues His-202–Gly-206, Asp-277–Arg-279, and Gly-325–Asn-329. Glu-378 serves as a coordination point for Mg(2+).

Belongs to the acetokinase family. As to quaternary structure, homodimer. The cofactor is Mg(2+). Mn(2+) serves as cofactor.

The protein localises to the cytoplasm. The catalysed reaction is acetate + ATP = acetyl phosphate + ADP. It participates in metabolic intermediate biosynthesis; acetyl-CoA biosynthesis; acetyl-CoA from acetate: step 1/2. Functionally, catalyzes the formation of acetyl phosphate from acetate and ATP. Can also catalyze the reverse reaction. The polypeptide is Acetate kinase (Halalkalibacterium halodurans (strain ATCC BAA-125 / DSM 18197 / FERM 7344 / JCM 9153 / C-125) (Bacillus halodurans)).